The sequence spans 469 residues: MASPRELTQNPLKKIWMPYSNGRPALHACQRGVCMTNCPTLIVMVGLPARGKTYISKKLTRYLNWIGVPTREFNVGQYRRNMVKTYKSFEFFLPDNEEGLKIRKQCALAALRDVRRFLSEEGGHVAVFDATNTTRERRATIFNFGEQNGYKTFFVESICVDPEVIAANIVQVKLGSPDYVNRDSDEATEDFMRRIECYENSYESLDEDLDRDLSYIKIMDVGQSYVVNRVADHIQSRIVYYLMNIHVTPRSIYLCRHGESELNLKGRIGGDPGLSPRGREFAKSLAQFISDQNIKDLKVWTSQMKRTIQTAEALGVPYEQWKVLNEIDAGVCEEMTYEEIQDNYPLEFALRDQDKYRYRYPKGESYEDLVQRLEPVIMELERQENVLVICHQAVMRCLLAYFLDKAAEQLPYLKCPLHTVLKLTPVAYGCKVESIFLNVAAVNTHRDRPQNVDISRPPEEALVTVPAHQ.

Residues 1–249 (MASPRELTQN…YYLMNIHVTP (249 aa)) form a 6-phosphofructo-2-kinase region. 46-54 (GLPARGKTY) is an ATP binding site. Beta-D-fructose 6-phosphate is bound by residues R79 and R103. The active site involves D129. The beta-D-fructose 6-phosphate site is built by T131 and R137. Residue C159 is part of the active site. 168–173 (NIVQVK) is a binding site for ATP. The beta-D-fructose 6-phosphate site is built by K173, R194, and Y198. The segment at 250–469 (RSIYLCRHGE…EALVTVPAHQ (220 aa)) is fructose-2,6-bisphosphatase. A beta-D-fructose 2,6-bisphosphate-binding site is contributed by R256. The active-site Tele-phosphohistidine intermediate is H257. N263, G269, and R306 together coordinate beta-D-fructose 2,6-bisphosphate. The active-site Proton donor/acceptor is E326. Beta-D-fructose 2,6-bisphosphate-binding residues include Y337, R351, K355, Y366, Q392, and R396. Residue 348–351 (FALR) coordinates ATP. ATP-binding positions include 392 to 396 (QAVMR) and Y428. Phosphothreonine; by PKC is present on T444.

It in the C-terminal section; belongs to the phosphoglycerate mutase family. In terms of assembly, homodimer.

The catalysed reaction is beta-D-fructose 2,6-bisphosphate + H2O = beta-D-fructose 6-phosphate + phosphate. The enzyme catalyses beta-D-fructose 6-phosphate + ATP = beta-D-fructose 2,6-bisphosphate + ADP + H(+). Its activity is regulated as follows. The most important regulatory mechanism of these opposing activities is by phosphorylation and dephosphorylation of the enzyme. Functionally, synthesis and degradation of fructose 2,6-bisphosphate. The protein is 6-phosphofructo-2-kinase/fructose-2,6-bisphosphatase 4 (PFKFB4) of Macaca fascicularis (Crab-eating macaque).